A 336-amino-acid chain; its full sequence is MQKMRTLGEFIVEKQHDFPHASGELSSLLASIRLAAKIVNREINKAGLADIIGASGNDNIQGEEQQKLDLYANEKFKAALEARDQVCGVASEEEDEAVAFNKELNKNAKYVVLMDPLDGSSNIDVNVSVGTIFSIYRRVSPVGTPPTQEDFLQPGNKQVAAGYVIYGSSTMLVYTTGNGVNGFTYDPSLGTFYLSHENMRIPENGKIYSINEGNYIRFPTGVKKYIKFCQENVPEDGRPYTSRYIGSLVADFHRNLLKGGIYLYPSTQSHPNGKLRLLYECNPMAFLIEQAGGLASDGVHRIMDIKPTELHQRVPFFVGSKNMVHKVEEFLETYPD.

4 residues coordinate Mg(2+): Glu-92, Asp-115, Leu-117, and Asp-118. Substrate is bound by residues 118-121 (DGSS), Asn-211, Tyr-244, 262-264 (YLY), and Lys-274. Glu-280 contributes to the Mg(2+) binding site.

This sequence belongs to the FBPase class 1 family. As to quaternary structure, homotetramer. The cofactor is Mg(2+).

The protein resides in the cytoplasm. The catalysed reaction is beta-D-fructose 1,6-bisphosphate + H2O = beta-D-fructose 6-phosphate + phosphate. It participates in carbohydrate biosynthesis; gluconeogenesis. The polypeptide is Fructose-1,6-bisphosphatase class 1 (Vibrio cholerae serotype O1 (strain ATCC 39541 / Classical Ogawa 395 / O395)).